The chain runs to 497 residues: Pancreatic alpha-amylase (497 aa).

Pyrrolidone carboxylic acid is present on Gln-1. 3 disulfides stabilise this stretch: Cys-28–Cys-86, Cys-70–Cys-115, and Cys-141–Cys-160. Asn-100, Arg-158, and Asp-167 together coordinate Ca(2+). Arg-195 provides a ligand contact to chloride. Catalysis depends on Asp-197, which acts as the Nucleophile. Ca(2+) is bound at residue His-201. The active-site Proton donor is the Glu-233. Positions 298 and 337 each coordinate chloride. 2 disulfides stabilise this stretch: Cys-379–Cys-385 and Cys-451–Cys-463.

This sequence belongs to the glycosyl hydrolase 13 family. In terms of assembly, monomer. Ca(2+) serves as cofactor. It depends on chloride as a cofactor.

It localises to the secreted. The protein resides in the extracellular space. It catalyses the reaction Endohydrolysis of (1-&gt;4)-alpha-D-glucosidic linkages in polysaccharides containing three or more (1-&gt;4)-alpha-linked D-glucose units.. The chain is Pancreatic alpha-amylase from Struthio camelus (Common ostrich).